A 508-amino-acid polypeptide reads, in one-letter code: Phenylalanine--tRNA ligase alpha subunit (508 aa).

Ala-2 carries the N-acetylalanine modification. Phosphoserine is present on residues Ser-193 and Ser-301. The residue at position 311 (Lys-311) is an N6-acetyllysine. Residues Thr-329, 372-374 (QIE), and Tyr-412 contribute to the L-phenylalanine site. A Mg(2+)-binding site is contributed by Glu-414. Phe-438 serves as a coordination point for L-phenylalanine.

The protein belongs to the class-II aminoacyl-tRNA synthetase family. Phe-tRNA synthetase alpha subunit type 2 subfamily. Heterotetramer; dimer of two heterodimers formed by FARSA and FARSB. Mg(2+) is required as a cofactor.

The protein localises to the cytoplasm. The enzyme catalyses tRNA(Phe) + L-phenylalanine + ATP = L-phenylalanyl-tRNA(Phe) + AMP + diphosphate + H(+). The chain is Phenylalanine--tRNA ligase alpha subunit (Farsa) from Mus musculus (Mouse).